The chain runs to 64 residues: Large ribosomal subunit protein uL29 (64 aa).

The protein belongs to the universal ribosomal protein uL29 family.

The protein is Large ribosomal subunit protein uL29 of Nitratiruptor sp. (strain SB155-2).